Reading from the N-terminus, the 451-residue chain is Phosphoglucosamine mutase (451 aa).

The active-site Phosphoserine intermediate is S107. Mg(2+)-binding residues include S107, D246, D248, and D250. S107 carries the phosphoserine modification.

The protein belongs to the phosphohexose mutase family. Requires Mg(2+) as cofactor. Activated by phosphorylation.

It catalyses the reaction alpha-D-glucosamine 1-phosphate = D-glucosamine 6-phosphate. In terms of biological role, catalyzes the conversion of glucosamine-6-phosphate to glucosamine-1-phosphate. This chain is Phosphoglucosamine mutase, found in Azoarcus sp. (strain BH72).